We begin with the raw amino-acid sequence, 236 residues long: Eukaryotic translation initiation factor 3 subunit J (236 aa).

A disordered region spans residues 20-88 (ANNINKWEGE…AEEEKRLANL (69 aa)). Residues 28–46 (GEDDDEDVKESWEDEEEKK) show a composition bias toward acidic residues. 2 stretches are compositionally biased toward basic and acidic residues: residues 47-58 (DEEKPTKTEVPV) and 68-88 (AKLEEEERLREAEEEKRLANL).

It belongs to the eIF-3 subunit J family. Component of the eukaryotic translation initiation factor 3 (eIF-3) complex. The eIF-3 complex interacts with pix.

It localises to the cytoplasm. Functionally, component of the eukaryotic translation initiation factor 3 (eIF-3) complex, which is involved in protein synthesis of a specialized repertoire of mRNAs and, together with other initiation factors, stimulates binding of mRNA and methionyl-tRNAi to the 40S ribosome. The eIF-3 complex specifically targets and initiates translation of a subset of mRNAs involved in cell proliferation. The polypeptide is Eukaryotic translation initiation factor 3 subunit J (Drosophila willistoni (Fruit fly)).